Consider the following 98-residue polypeptide: NADH-ubiquinone oxidoreductase chain 4L (98 aa).

A run of 3 helical transmembrane segments spans residues 1 to 21 (MTMV…GLLM), 29 to 49 (SLLC…ITIL), and 61 to 81 (IILL…LVMV).

It belongs to the complex I subunit 4L family. In terms of assembly, core subunit of respiratory chain NADH dehydrogenase (Complex I) which is composed of 45 different subunits.

It is found in the mitochondrion inner membrane. The enzyme catalyses a ubiquinone + NADH + 5 H(+)(in) = a ubiquinol + NAD(+) + 4 H(+)(out). Core subunit of the mitochondrial membrane respiratory chain NADH dehydrogenase (Complex I) which catalyzes electron transfer from NADH through the respiratory chain, using ubiquinone as an electron acceptor. Part of the enzyme membrane arm which is embedded in the lipid bilayer and involved in proton translocation. This chain is NADH-ubiquinone oxidoreductase chain 4L (MT-ND4L), found in Ommatophoca rossii (Ross seal).